We begin with the raw amino-acid sequence, 1330 residues long: MFFQHSQLQNSDHLLHESMADSNHQSLSPPCANGHRSTISLRDDQGGTFCLICFSNLVSDPRIPTVHVSYALHQLSIAISEPIFLRTLLSSHIHFLVSPLVHALSSIDDAPIAIQIMDMISLLCSVEESSIGEDFVERISDQLSSGALGWSRRQLHMLHCFGVLMSCENININSHIRDKEALVCQLVEGLQLPSEEIRGEILFALYKFSALQFTEQNVDGIEVLSLLCPKLLCLSLEALAKTQRDDVRLNCVALLTILAQQGLLANSHSNSASSMSLDEVDDDPMQTAENVAARPCLNVLFAEAIKGPLLSTDSEVQIKTLDLIFHYISQESTPSKQIQVMVEENVADYIFEILRLSECKDQVVNSCLRVLDLFSLAEHSFRKRLVIGFPSVIRVLHYVGEVPCHPFQIQTLKLISSCISDFPGIASSSQVQEIALVLKKMLERYYSQEMGLFPDAFAIICSVFVSLMKTPSFGETADVLTSLQESLRHSILASLSLPEKDSTQILHAVYLLNEVYVYCTASTSINKTICIELRHCVIDVCTSHLLPWFLSDVNEVNEEATLGIMETFHSILLQNSDIQAKEFAELLVSADWFSFSFGCLGNFCTDNMKQRIYLMLSSLVDILLEQKTGSHIRDALHCLPSDPQDLLFLLGQASSNNQELASCQSAALLIFHTSSIYNDRLADDKLVLASLEQYIILNKTSLICAISDSPALLNLVNLYGLCRSLQNERYQISYSLEAERIIFHLLNEYEWDLGSINIHLESLKWLFQQESISKSLIYQIQKISRNNLIGNEVHNVYGDGRQRSLTYWFAKLISEGDNYAATLLVNLLTQLAEKEEQENDVISILNLMNTIVSIFPTASNNLSMNGIGSVIHRLVSGFSNSSLGTSFRTLLLLVFNILTSVQPAVLMIDESWYAVSIKLLNFLSLRDTAIKQNHEDMVVIGILSLVLYHSSDGALVEASRNIVSNSYLVSAINTVVDVACSKGPALTQCQDETNIGEALAFTLLLYFFSLRSLQIVLAGAVDWQTFFGTSTSLETLPVVCIHCHNLCRLMHFGAPQIKLIASYCLLELLTGLSEQVDIKKEQLQCSSSYLKSMKAVLGGLVFCDDIRVATNSALCLSMILGWEDMEGRTEMLKTSSWYRFIAEEMSVSLAMPCSASSTYVNHHKPAVYLTVAMLRLKNKPVWLRTVFDESCISSMIQNLNGINISREIVILFRELMQAELLNSQQVTKLDRAFQECRKQMHRNGTRDETVEEQVQRKIPSIHDHSEFCNYLVHLMVSNSFGHPSESETYTQKKKQILDEMEQFSELISTREGRVSPIQEETRQMQTERIV.

Positions 1310–1330 (REGRVSPIQEETRQMQTERIV) are disordered.

In terms of assembly, interacts with SPO11-1. According to PubMed:28855712, may interact with SPO11-2; this is in contradiction with PubMed:9461215 which claims that it seems to not interact with SPO11-2. Binds to DFO, PRD3 and MTOPVIB. Facilitates an interaction between PRD3 and DFO. Expressed in flower buds.

The protein localises to the nucleus. Involved in DNA cleavage that forms the double-strand breaks (DSB) that initiate meiotic recombination. The chain is Protein PUTATIVE RECOMBINATION INITIATION DEFECT 1 from Arabidopsis thaliana (Mouse-ear cress).